Here is a 406-residue protein sequence, read N- to C-terminus: Putative ankyrin repeat protein RF_0266 (406 aa).

ANK repeat units follow at residues 68 to 98 (TSHS…DINN), 103 to 129 (NYIT…QDDI), 130 to 161 (KVQN…IIKP), 163 to 189 (HIEL…DIEK), and 203 to 232 (SIDC…KPEQ).

This chain is Putative ankyrin repeat protein RF_0266, found in Rickettsia felis (strain ATCC VR-1525 / URRWXCal2) (Rickettsia azadi).